Here is a 366-residue protein sequence, read N- to C-terminus: Mitogen-activated protein kinase sakA (366 aa).

The 280-residue stretch at 20–299 (YTDLQPVGMG…AGEALAHEYL (280 aa)) folds into the Protein kinase domain. ATP contacts are provided by residues 26–34 (VGMGAFGLV) and Lys49. The active-site Proton acceptor is the Asp141. Thr171 carries the phosphothreonine modification. Positions 171-173 (TGY) match the TXY motif. Tyr173 bears the Phosphotyrosine mark.

This sequence belongs to the protein kinase superfamily. Ser/Thr protein kinase family. MAP kinase subfamily. HOG1 sub-subfamily. Interacts with the AGC kinase ypkA. Interacts with sakA upon osmotic and cell wall stresses. The cofactor is Mg(2+). In terms of processing, dually phosphorylated on Thr-171 and Tyr-173, which activates the enzyme. Environmental stresses such as high temperature, osmotic stress, cold stress or ethanol stress modulate the activation of sakA via phosphorylation.

The protein localises to the cytoplasm. It is found in the nucleus. The catalysed reaction is L-seryl-[protein] + ATP = O-phospho-L-seryl-[protein] + ADP + H(+). It carries out the reaction L-threonyl-[protein] + ATP = O-phospho-L-threonyl-[protein] + ADP + H(+). Its activity is regulated as follows. Activated by tyrosine and threonine phosphorylation. Deactivated by protein phosphatase 2C homolog 2 ptcB. In terms of biological role, proline-directed serine/threonine-protein kinase involved in a signal transduction pathway that is activated by changes in the osmolarity of the extracellular environment. Controls osmotic regulation of transcription of target genes. Involved in environmental stress response. With mpkC, plays a redundant or cooperative role in the conidial stress resistance. Also plays a supportive role in osmotic stress adaptation when sakA is deficient. Involved in paradoxical growth, the cell wall integrity (CWI) pathway and biofilm formation. Also collaborates with mpkC to allow ful virulence in a neutropenic murine model ofinvasive pulmonary aspergillosis. MpkC and sakA have both independent and collaborative functions during the transcriptional response to transient osmotic stress and sakA not only seems to modulate pathways involved in nucleotide, fatty acid, nitrogen and organic acid biosynthesis but is also important for the activation of genes involved in mitochondrial and endoplasmic reticulum functions. The sequence is that of Mitogen-activated protein kinase sakA from Aspergillus fumigatus (strain ATCC MYA-4609 / CBS 101355 / FGSC A1100 / Af293) (Neosartorya fumigata).